The sequence spans 305 residues: Type II restriction enzyme SsoII (305 aa).

It carries out the reaction Endonucleolytic cleavage of DNA to give specific double-stranded fragments with terminal 5'-phosphates.. In terms of biological role, a P subtype restriction enzyme that recognizes the double-stranded sequence 5'-CCNGG-3' and cleaves before C-1. The polypeptide is Type II restriction enzyme SsoII (ssoIIR) (Shigella sonnei).